Here is a 345-residue protein sequence, read N- to C-terminus: Nuclear distribution protein nudE-like 1-A (345 aa).

Residues 19 to 190 (WRELSKRLKQ…LAVRERQTDG (172 aa)) adopt a coiled-coil conformation. A compositionally biased stretch (basic and acidic residues) spans 182-192 (AVRERQTDGTR). Disordered stretches follow at residues 182 to 206 (AVRE…CDKT) and 326 to 345 (PPGV…PLSV). The segment covering 334 to 345 (PPSPPGMLPLSV) has biased composition (pro residues).

The protein belongs to the nudE family. Post-translationally, phosphorylated in mitosis.

The protein resides in the cytoplasm. It is found in the cytoskeleton. It localises to the microtubule organizing center. Its subcellular location is the centrosome. The protein localises to the spindle. Its function is as follows. Required for organization of the cellular microtubule array and microtubule anchoring at the centrosome. Positively regulates the activity of the minus-end directed microtubule motor protein dynein. May enhance dynein-mediated microtubule sliding by targeting dynein to the microtubule plus end. Positively regulates lysosome peripheral distribution and ruffled border formation in osteoclasts. This is Nuclear distribution protein nudE-like 1-A (ndel1-a) from Xenopus laevis (African clawed frog).